The chain runs to 520 residues: Mu-like prophage FluMu protein gp29 (520 aa).

The protein to phage Mu protein gp29.

The protein is Mu-like prophage FluMu protein gp29 of Haemophilus influenzae (strain ATCC 51907 / DSM 11121 / KW20 / Rd).